Here is a 284-residue protein sequence, read N- to C-terminus: ATP synthase subunit a (284 aa).

A run of 6 helical transmembrane segments spans residues 55-75, 116-136, 165-185, 196-216, 234-254, and 255-275; these read AIHV…LGLF, IAPL…LKLI, FGMS…VKGV, PFNH…ALII, VVFI…NVPW, and AIFH…LTVV.

The protein belongs to the ATPase A chain family. F-type ATPases have 2 components, CF(1) - the catalytic core - and CF(0) - the membrane proton channel. CF(1) has five subunits: alpha(3), beta(3), gamma(1), delta(1), epsilon(1). CF(0) has three main subunits: a(1), b(2) and c(9-12). The alpha and beta chains form an alternating ring which encloses part of the gamma chain. CF(1) is attached to CF(0) by a central stalk formed by the gamma and epsilon chains, while a peripheral stalk is formed by the delta and b chains.

The protein localises to the cell inner membrane. Its function is as follows. Key component of the proton channel; it plays a direct role in the translocation of protons across the membrane. In Marinobacter nauticus (strain ATCC 700491 / DSM 11845 / VT8) (Marinobacter aquaeolei), this protein is ATP synthase subunit a.